Reading from the N-terminus, the 151-residue chain is Cathelicidin-3 (151 aa).

Positions 1 to 17 (MLSCWVLLLALLGGACA) are cleaved as a signal peptide. The propeptide occupies 18-122 (LPAPLGYSQA…TCVDSMADPV (105 aa)). 2 disulfides stabilise this stretch: Cys75–Cys86 and Cys97–Cys114. Residues 128–148 (WPLVPVAINTVAAGINLYKAI) form a helical membrane-spanning segment.

The protein belongs to the cathelicidin family. In terms of tissue distribution, detected in bone marrow, liver and lung.

The protein localises to the secreted. It localises to the membrane. May bind bacterial lipopolysaccharide (LPS). May have antimicrobial activity and play a role in the innate immune response. The protein is Cathelicidin-3 (CATHL3) of Gallus gallus (Chicken).